Here is a 160-residue protein sequence, read N- to C-terminus: Cyclic di-GMP-binding protein Smlt4090 (160 aa).

Residues Lys33, Lys132, Arg134, Asp135, and Asp160 each coordinate 3',3'-c-di-GMP.

Belongs to the YajQ family.

Its function is as follows. Cyclic di-GMP effector that significantly contributes to virulence. Binds bis-(3',5')-cyclic diguanylate (cyclic di-GMP or c-di-GMP), an important bacterial second messenger that controls a wide range of cellular processes. This Stenotrophomonas maltophilia (strain K279a) protein is Cyclic di-GMP-binding protein Smlt4090.